Here is a 155-residue protein sequence, read N- to C-terminus: 6,7-dimethyl-8-ribityllumazine synthase (155 aa).

5-amino-6-(D-ribitylamino)uracil contacts are provided by residues W24, A58–E60, and A82–I84. G87–T88 serves as a coordination point for (2S)-2-hydroxy-3-oxobutyl phosphate. The active-site Proton donor is the H90. F115 is a 5-amino-6-(D-ribitylamino)uracil binding site. Position 129 (R129) interacts with (2S)-2-hydroxy-3-oxobutyl phosphate.

Belongs to the DMRL synthase family. As to quaternary structure, forms an icosahedral capsid composed of 60 subunits, arranged as a dodecamer of pentamers.

It catalyses the reaction (2S)-2-hydroxy-3-oxobutyl phosphate + 5-amino-6-(D-ribitylamino)uracil = 6,7-dimethyl-8-(1-D-ribityl)lumazine + phosphate + 2 H2O + H(+). It functions in the pathway cofactor biosynthesis; riboflavin biosynthesis; riboflavin from 2-hydroxy-3-oxobutyl phosphate and 5-amino-6-(D-ribitylamino)uracil: step 1/2. Its function is as follows. Catalyzes the formation of 6,7-dimethyl-8-ribityllumazine by condensation of 5-amino-6-(D-ribitylamino)uracil with 3,4-dihydroxy-2-butanone 4-phosphate. This is the penultimate step in the biosynthesis of riboflavin. This is 6,7-dimethyl-8-ribityllumazine synthase from Teredinibacter turnerae (strain ATCC 39867 / T7901).